A 314-amino-acid polypeptide reads, in one-letter code: Taste receptor type 2 member 42 (314 aa).

At 1 to 7 (MATELDK) the chain is on the extracellular side. The chain crosses the membrane as a helical span at residues 8 to 28 (IFLTLAIVEFIIGMLGNVFIG). At 29–50 (LANCSEGIKNQKVFSVDFILTC) the chain is on the cytoplasmic side. The helical transmembrane segment at 51–71 (LAISTIGHLLVILFDSHVAGL) threads the bilayer. Topologically, residues 72–101 (APHLYATDRVVRPVTVLWHMTNHLTTWLAT) are extracellular. A helical transmembrane segment spans residues 102–122 (CLSIFYFFKIAHFPHSLFLWL). Over 123–127 (RWRMN) the chain is Cytoplasmic. A helical transmembrane segment spans residues 128–148 (RVIAILLTLSLFLLIFDCLVL). Topologically, residues 149–187 (EMFIDISLNIIDKSNLTLYLDESKTPYDKLFLLKTLLSL) are extracellular. N-linked (GlcNAc...) asparagine glycosylation occurs at N163. A helical membrane pass occupies residues 188 to 208 (NSFIPFSLCLTSLLFLFLSLV). The Cytoplasmic portion of the chain corresponds to 209-238 (RHTRNLKLSSLGSRDSSTEAHRRAMKMVMS). Residues 239–259 (FLFLFIVHFFSLQVANWTFCI) form a helical membrane-spanning segment. The Extracellular segment spans residues 260 to 265 (LGNNKY). Residues 266 to 286 (TQFVMLALHAFPSCHSFILIL) traverse the membrane as a helical segment. At 287–314 (GNSKLRQTAVRLLWHLRNYTKRPNPLPL) the chain is on the cytoplasmic side.

This sequence belongs to the G-protein coupled receptor T2R family.

It is found in the membrane. Its function is as follows. Receptor that may play a role in the perception of bitterness and is gustducin-linked. May play a role in sensing the chemical composition of the gastrointestinal content. The activity of this receptor may stimulate alpha gustducin, mediate PLC-beta-2 activation and lead to the gating of TRPM5. This is Taste receptor type 2 member 42 (TAS2R42) from Papio hamadryas (Hamadryas baboon).